The following is a 197-amino-acid chain: 3-isopropylmalate dehydratase small subunit (197 aa).

Belongs to the LeuD family. LeuD type 1 subfamily. As to quaternary structure, heterodimer of LeuC and LeuD.

The catalysed reaction is (2R,3S)-3-isopropylmalate = (2S)-2-isopropylmalate. Its pathway is amino-acid biosynthesis; L-leucine biosynthesis; L-leucine from 3-methyl-2-oxobutanoate: step 2/4. Catalyzes the isomerization between 2-isopropylmalate and 3-isopropylmalate, via the formation of 2-isopropylmaleate. This is 3-isopropylmalate dehydratase small subunit from Azobacteroides pseudotrichonymphae genomovar. CFP2.